The primary structure comprises 552 residues: MERFLRKYNISGDYANATRSISAISPQWTCSHLKRNCLFNGMCVKQNFERAMTAATDAEEPAKAYKLVELAKEAMYDRETVWLQCFKSFSQPYEEDVEGKMKRCRVQLLEDYRKSGMMDEAVKQSALVNSERVRLDDSLSAMPYIYVPIKEGQIVNPTFISRYRQIAYYFYNPDAADDWIDPNLFGIRGQHNQIKREVERQINTCLYTGYKGRVFQVMFLPIQLINFLRMDDFAKHFNRYASMTIQQYLRVGYAEEVRYVQQLFGRVPTGEFPLHQMMLIRRDFPTRDRSIVEARVRRSGDENWQSWLLPMIIVREGLDHPDRWEWLIDYMDRKHTCQLCYLKHSKQIPTCGVIDVRASELTGCSPFKTVKIEEHVGNDSVFKTKLVRDEQIGRIGDHYYTTNCYTGAEALITTAIHIHRWIRGCGIWNDEGWQEGIFMLGRVLLRWELTKAQRSALLRLFCFVCYGYAPRADGTIPDWNNLGSFLDIILKGPELSEDEDERAYATMFEMVRCIITLCYAEKVHFAGFAAPACESGEVINLAARMSQMWMEY.

In Bluetongue virus 1 (isolate South Africa) (BTV 1), this protein is Non-structural protein NS1 (Segment-5).